A 644-amino-acid chain; its full sequence is Macrolide export ATP-binding/permease protein MacB (644 aa).

The 239-residue stretch at 7-245 folds into the ABC transporter domain; it reads IELQDITRSF…IPETDQNGRR (239 aa). 43-50 serves as a coordination point for ATP; sequence GPSGSGKS. The next 4 helical transmembrane spans lie at 271 to 291, 526 to 546, 570 to 590, and 607 to 627; these read ALTLLGIVIGVASVITMLAIG, IAAISLLVGGIGVMNIMLVSV, FLTEAWLVSAIGGLIGVVIGI, and LLPMALAFGCAFATGLLFGFL.

Belongs to the ABC transporter superfamily. Macrolide exporter (TC 3.A.1.122) family. In terms of assembly, homodimer. Part of the tripartite efflux system MacAB-TolC, which is composed of an inner membrane transporter, MacB, a periplasmic membrane fusion protein, MacA, and an outer membrane component, TolC. The complex forms a large protein conduit and can translocate molecules across both the inner and outer membranes. Interacts with MacA.

It is found in the cell inner membrane. In terms of biological role, part of the tripartite efflux system MacAB-TolC. MacB is a non-canonical ABC transporter that contains transmembrane domains (TMD), which form a pore in the inner membrane, and an ATP-binding domain (NBD), which is responsible for energy generation. Confers resistance against macrolides. The protein is Macrolide export ATP-binding/permease protein MacB of Marinobacter nauticus (strain ATCC 700491 / DSM 11845 / VT8) (Marinobacter aquaeolei).